The sequence spans 195 residues: tRNA (pseudouridine(54)-N(1))-methyltransferase (195 aa).

Leucine 129 lines the S-adenosyl-L-methionine pocket.

This sequence belongs to the methyltransferase superfamily. TrmY family. Homodimer.

It is found in the cytoplasm. The catalysed reaction is pseudouridine(54) in tRNA + S-adenosyl-L-methionine = N(1)-methylpseudouridine(54) in tRNA + S-adenosyl-L-homocysteine + H(+). Functionally, specifically catalyzes the N1-methylation of pseudouridine at position 54 (Psi54) in tRNAs. The polypeptide is tRNA (pseudouridine(54)-N(1))-methyltransferase (Methanocorpusculum labreanum (strain ATCC 43576 / DSM 4855 / Z)).